The following is a 548-amino-acid chain: Organic cation transporter protein (548 aa).

Residues 1 to 22 lie on the Cytoplasmic side of the membrane; sequence MGYDDVITHLGEFGPYQKRIYY. Residues 23–43 form a helical membrane-spanning segment; it reads LLCLPAIVCAFHKLAGVFLLA. At 44–127 the chain is on the extracellular side; sequence KPDFRCALPY…TEWNLVCSRS (84 aa). Residues asparagine 55, asparagine 67, asparagine 89, and asparagine 97 are each glycosylated (N-linked (GlcNAc...) asparagine). The helical transmembrane segment at 128 to 148 threads the bilayer; the sequence is LLSATSDSLFMLGVLLGSLIF. Topologically, residues 149-158 are cytoplasmic; sequence GQMSDKLGRK. The chain crosses the membrane as a helical span at residues 159-179; it reads PTFFASLVLQLIFGVLAAVAP. The Extracellular segment spans residues 180 to 189; it reads EYFSYTISRM. Residues 190-210 form a helical membrane-spanning segment; it reads IVGATTSGVFLVAYVIALEMV. Residues 211–219 are Cytoplasmic-facing; the sequence is GSSYRLFAG. A helical transmembrane segment spans residues 220-240; it reads VAMQMFFSVGFMLTAGFAYFI. Residues 241–244 lie on the Extracellular side of the membrane; the sequence is HDWR. The chain crosses the membrane as a helical span at residues 245 to 265; sequence WLQIAITLPGLLFLCYYWIIP. The Cytoplasmic portion of the chain corresponds to 266–337; the sequence is ESARWLLMKG…LLRYPNLRRK (72 aa). The helical transmembrane segment at 338–358 threads the bilayer; it reads TLLIFFDWFVNSGVYYGLSWN. At 359 to 366 the chain is on the extracellular side; that stretch reads TNNLGGNQ. Residues 367–387 traverse the membrane as a helical segment; it reads LVNFMISGAVEIPGYTLLLFT. Residues 388 to 395 lie on the Cytoplasmic side of the membrane; sequence LNRWGRRS. The helical transmembrane segment at 396–416 threads the bilayer; sequence ILCGTMMVAGISLLATIFVPS. Over 417–419 the chain is Extracellular; it reads DMN. The chain crosses the membrane as a helical span at residues 420-440; the sequence is WLIVACAMIGKLAITSSYGTI. The Cytoplasmic portion of the chain corresponds to 441–453; the sequence is YIFSAEQFPTVVR. The chain crosses the membrane as a helical span at residues 454–474; sequence NVGLGASSMVARVGGILAPYL. Topologically, residues 475–482 are extracellular; sequence KLLGEIWR. A helical transmembrane segment spans residues 483 to 503; it reads PLPLIICGALSLTAGLLSLLL. Residues 504–548 lie on the Cytoplasmic side of the membrane; it reads PETLNKPMPETIEDGENFGKKPAPQETAEEGGTQELSGMLNGKSG. The tract at residues 512–548 is disordered; it reads PETIEDGENFGKKPAPQETAEEGGTQELSGMLNGKSG.

This sequence belongs to the major facilitator (TC 2.A.1) superfamily. Organic cation transporter (TC 2.A.1.19) family. Expressed in embryos and adults at low level. Expressed at higher level in third instar larvae.

The protein localises to the membrane. Functionally, probably transports organic cations. The sequence is that of Organic cation transporter protein (Orct) from Drosophila melanogaster (Fruit fly).